The sequence spans 208 residues: FMN-dependent NADH:quinone oxidoreductase 4 (208 aa).

This sequence belongs to the azoreductase type 1 family. In terms of assembly, homodimer. It depends on FMN as a cofactor.

The enzyme catalyses 2 a quinone + NADH + H(+) = 2 a 1,4-benzosemiquinone + NAD(+). It carries out the reaction N,N-dimethyl-1,4-phenylenediamine + anthranilate + 2 NAD(+) = 2-(4-dimethylaminophenyl)diazenylbenzoate + 2 NADH + 2 H(+). Quinone reductase that provides resistance to thiol-specific stress caused by electrophilic quinones. In terms of biological role, also exhibits azoreductase activity. Catalyzes the reductive cleavage of the azo bond in aromatic azo compounds to the corresponding amines. This is FMN-dependent NADH:quinone oxidoreductase 4 from Bacillus anthracis.